The chain runs to 456 residues: 26S proteasome non-ATPase regulatory subunit 12 (456 aa).

A2 carries the N-acetylalanine modification. K92 participates in a covalent cross-link: Glycyl lysine isopeptide (Lys-Gly) (interchain with G-Cter in SUMO1); alternate. A Glycyl lysine isopeptide (Lys-Gly) (interchain with G-Cter in SUMO2); alternate cross-link involves residue K92. N6-acetyllysine occurs at positions 221 and 368. The PCI domain occupies 242 to 420 (SICKHYRAIY…GIINFQRPKD (179 aa)).

It belongs to the proteasome subunit p55 family. As to quaternary structure, component of the 19S proteasome regulatory particle complex. The 26S proteasome consists of a 20S core particle (CP) and two 19S regulatory subunits (RP). The regulatory particle is made of a lid composed of 9 subunits including PSMD12, a base containing 6 ATPases and few additional components. Interacts with ERCC6.

In terms of biological role, component of the 26S proteasome, a multiprotein complex involved in the ATP-dependent degradation of ubiquitinated proteins. This complex plays a key role in the maintenance of protein homeostasis by removing misfolded or damaged proteins, which could impair cellular functions, and by removing proteins whose functions are no longer required. Therefore, the proteasome participates in numerous cellular processes, including cell cycle progression, apoptosis, or DNA damage repair. In Bos taurus (Bovine), this protein is 26S proteasome non-ATPase regulatory subunit 12 (PSMD12).